Here is a 971-residue protein sequence, read N- to C-terminus: Breast cancer type 2 susceptibility protein homolog (971 aa).

A compositionally biased stretch (polar residues) spans 1-15 (MDQNGASGSHPNRLS). Disordered regions lie at residues 1–30 (MDQN…ATVS), 130–155 (SRKR…LSVQ), 349–395 (KLKL…DQPN), and 420–466 (MQCS…SSHQ). Basic residues predominate over residues 130–139 (SRKRDPKSHK). A compositionally biased stretch (basic and acidic residues) spans 349–364 (KLKLEPSSQKEQKSSK). 3 stretches are compositionally biased toward polar residues: residues 375 to 392 (SKQS…TILD), 420 to 432 (MQCS…SKNA), and 453 to 466 (KQTP…SSHQ). BRCA2 repeat units lie at residues 570–604 (AEPE…EFQS), 671–705 (NESQ…QSKA), and 746–780 (SETE…EFQA). Positions 916–971 (MERFAPKPSSTSTPLADRDLNRSKDCTKNRQDAEDMSPICMQPKKSRRLGLSRSRY) are disordered. The span at 931–948 (ADRDLNRSKDCTKNRQDA) shows a compositional bias: basic and acidic residues. Basic residues predominate over residues 959–971 (KKSRRLGLSRSRY).

As to quaternary structure, interacts with Rad9. Interacts with spn-A/Rad51. Interacts with cyclin CycG.

The protein resides in the nucleus. Its function is as follows. Involved in and required for double-strand break repair by meiotic and mitotic homologous recombination. During meiosis, has a dual role in the repair of meiotic double-stranded breaks and the efficient activation of the meiotic recombination checkpoint. The chain is Breast cancer type 2 susceptibility protein homolog from Drosophila melanogaster (Fruit fly).